The sequence spans 266 residues: Probable dihydroorotate dehydrogenase B (NAD(+)), electron transfer subunit (266 aa).

The region spanning 5-99 (NVPEVLEIKR…RGPYGRGFEL (95 aa)) is the FAD-binding FR-type domain. Positions 217, 222, 225, and 235 each coordinate [2Fe-2S] cluster.

It belongs to the PyrK family. In terms of assembly, heterotetramer of 2 PyrK and 2 PyrD type B subunits. The cofactor is [2Fe-2S] cluster. It depends on FAD as a cofactor.

It participates in pyrimidine metabolism; UMP biosynthesis via de novo pathway; orotate from (S)-dihydroorotate (NAD(+) route): step 1/1. In terms of biological role, responsible for channeling the electrons from the oxidation of dihydroorotate from the FMN redox center in the PyrD type B subunit to the ultimate electron acceptor NAD(+). This Methanothermobacter thermautotrophicus (strain ATCC 29096 / DSM 1053 / JCM 10044 / NBRC 100330 / Delta H) (Methanobacterium thermoautotrophicum) protein is Probable dihydroorotate dehydrogenase B (NAD(+)), electron transfer subunit.